The sequence spans 390 residues: Serpin B3 (390 aa).

Met1 carries the N-acetylmethionine modification.

Belongs to the serpin family. Ov-serpin subfamily. In terms of assembly, interacts with MAPK8/JNK1. Squamous cells. Expressed in some hepatocellular carcinoma (at protein level).

It localises to the cytoplasm. In terms of biological role, may act as a papain-like cysteine protease inhibitor to modulate the host immune response against tumor cells. Also functions as an inhibitor of UV-induced apoptosis via suppression of the activity of c-Jun NH(2)-terminal kinase (JNK1). This Homo sapiens (Human) protein is Serpin B3 (SERPINB3).